The primary structure comprises 150 residues: Flagellar assembly factor FliW (150 aa).

It belongs to the FliW family. As to quaternary structure, interacts with translational regulator CsrA. Interacts with flagellins FlaB1, FlaB2 and FlaB3.

The protein localises to the cytoplasm. Acts as an anti-CsrA protein, binds CsrA and prevents it from repressing translation of its target genes, one of which is flagellin. Binds to flagellin and participates in the assembly of the flagellum. Functionally, binds to the C-terminal region of flagellin, which is implicated in polymerization, and participates in the assembly of the flagellum. This Treponema pallidum (strain Nichols) protein is Flagellar assembly factor FliW.